The primary structure comprises 374 residues: N5-carboxyaminoimidazole ribonucleotide synthase (374 aa).

Residues R108, K148, G153–Q159, E183–L186, E191, H214, and N266–E267 each bind ATP. An ATP-grasp domain is found at K112–T296.

This sequence belongs to the PurK/PurT family. As to quaternary structure, homodimer.

It catalyses the reaction 5-amino-1-(5-phospho-beta-D-ribosyl)imidazole + hydrogencarbonate + ATP = 5-carboxyamino-1-(5-phospho-D-ribosyl)imidazole + ADP + phosphate + 2 H(+). It participates in purine metabolism; IMP biosynthesis via de novo pathway; 5-amino-1-(5-phospho-D-ribosyl)imidazole-4-carboxylate from 5-amino-1-(5-phospho-D-ribosyl)imidazole (N5-CAIR route): step 1/2. In terms of biological role, catalyzes the ATP-dependent conversion of 5-aminoimidazole ribonucleotide (AIR) and HCO(3)(-) to N5-carboxyaminoimidazole ribonucleotide (N5-CAIR). The chain is N5-carboxyaminoimidazole ribonucleotide synthase from Staphylococcus aureus (strain MSSA476).